The sequence spans 347 residues: MSNSVPVIAVDAMGGDHGPSIVVPGAVRAARENSLKLILVGDKDAISAELNRLPLDGVAYDIVHASQVAGMEEKPSDILRRKKDASVQVACRLVRSGDADGIVSAGNSGATVACGMFIMGRIPGVERPALASVMPTEKKPCVLLDVGANVDCKPYHLFQFGLMAEAFARDLLEIETPRVGLLSIGEEEGKGNSQVKEAYELLREAKNINFVGNIEGCDLFTGNVDVAVCDGFVGNVALKLSEGLASSLARLLKRELLTGIKAKIGTFLARDAFRRFARFVDYAEYGGAPLLGLQGIAIVCHGASNEKAIASAVGMAGTFVSKGTYHHLVETISANEELTSYGKAVKQ.

The protein belongs to the PlsX family. In terms of assembly, homodimer. Probably interacts with PlsY.

Its subcellular location is the cytoplasm. The catalysed reaction is a fatty acyl-[ACP] + phosphate = an acyl phosphate + holo-[ACP]. It functions in the pathway lipid metabolism; phospholipid metabolism. Its function is as follows. Catalyzes the reversible formation of acyl-phosphate (acyl-PO(4)) from acyl-[acyl-carrier-protein] (acyl-ACP). This enzyme utilizes acyl-ACP as fatty acyl donor, but not acyl-CoA. The protein is Phosphate acyltransferase of Oleidesulfovibrio alaskensis (strain ATCC BAA-1058 / DSM 17464 / G20) (Desulfovibrio alaskensis).